A 106-amino-acid polypeptide reads, in one-letter code: Iron-sulfur cluster assembly protein CyaY (106 aa).

It belongs to the frataxin family.

Functionally, involved in iron-sulfur (Fe-S) cluster assembly. May act as a regulator of Fe-S biogenesis. This chain is Iron-sulfur cluster assembly protein CyaY, found in Colwellia psychrerythraea (strain 34H / ATCC BAA-681) (Vibrio psychroerythus).